Reading from the N-terminus, the 508-residue chain is Pentatricopeptide repeat-containing protein At3g04130, mitochondrial (508 aa).

The transit peptide at 1–74 (MSWLIQNRIG…DSEDDVFKRL (74 aa)) directs the protein to the mitochondrion. PPR repeat units lie at residues 120–150 (SSDAYDMAVDILGKAKKWDRMKEFVERMRGD), 154–188 (TLNTVAKIMRRFAGAGEWEEAVGIFDRLGEFGLEK), 189–219 (NTESMNLLLDTLCKEKRVEQARVVLLQLKSH), 223–257 (NAHTFNIFIHGWCKANRVEEALWTIQEMKGHGFRP), 258–292 (CVISYTTIIRCYCQQFEFIKVYEMLSEMEANGSPP), 293–327 (NSITYTTIMSSLNAQKEFEEALRVATRMKRSGCKP), 328–363 (DSLFYNCLIHTLARAGRLEEAERVFRVEMPELGVSI), 364–398 (NTSTYNSMIAMYCHHDEEDKAIELLKEMESSNLCN), 400–434 (DVHTYQPLLRSCFKRGDVVEVGKLLKEMVTKHHLS), and 436–470 (DESTYTFLIQRLCRANMCEWAYCLFEEMISQDITP).

This sequence belongs to the PPR family. P subfamily.

The protein resides in the mitochondrion. The protein is Pentatricopeptide repeat-containing protein At3g04130, mitochondrial of Arabidopsis thaliana (Mouse-ear cress).